A 688-amino-acid chain; its full sequence is Probable transcription factor gsfR1 (688 aa).

The segment covering M1–V16 has biased composition (acidic residues). The segment at M1 to A95 is disordered. Positions R24–R36 are enriched in polar residues. Residues E58–P75 are compositionally biased toward basic and acidic residues.

Its subcellular location is the nucleus. In terms of biological role, probable transcription factor that regulates expression of the gene cluster that mediates the biosynthesis of Griseofulvin, an important antifungal drug that has been in use for a long time for treating dermatophyte infections. This Penicillium aethiopicum protein is Probable transcription factor gsfR1.